The primary structure comprises 98 residues: NADH-ubiquinone oxidoreductase chain 4L (98 aa).

A run of 3 helical transmembrane segments spans residues 1–21, 29–49, and 61–81; these read MSLV…GLLM, ALLC…LTIL, and IILL…LVMV.

It belongs to the complex I subunit 4L family. In terms of assembly, core subunit of respiratory chain NADH dehydrogenase (Complex I) which is composed of 45 different subunits.

It is found in the mitochondrion inner membrane. It carries out the reaction a ubiquinone + NADH + 5 H(+)(in) = a ubiquinol + NAD(+) + 4 H(+)(out). Core subunit of the mitochondrial membrane respiratory chain NADH dehydrogenase (Complex I) which catalyzes electron transfer from NADH through the respiratory chain, using ubiquinone as an electron acceptor. Part of the enzyme membrane arm which is embedded in the lipid bilayer and involved in proton translocation. The sequence is that of NADH-ubiquinone oxidoreductase chain 4L (MT-ND4L) from Lagenorhynchus albirostris (White-beaked dolphin).